A 764-amino-acid polypeptide reads, in one-letter code: Transient receptor potential cation channel subfamily V member 2 (764 aa).

A disordered region spans residues 1-46 (MTSPSSSPVFRLETLDGGQEDGSEADRGKLDFGSGLPPMESQFQGE). Residues 1-388 (MTSPSSSPVF…LLQAKWDLLI (388 aa)) are required for interaction with SLC50A1. At 1 to 390 (MTSPSSSPVF…QAKWDLLIPK (390 aa)) the chain is on the cytoplasmic side. The residue at position 6 (Ser6) is a Phosphoserine. 6 ANK repeats span residues 72 to 114 (NRFD…TEGS), 115 to 161 (TGKT…DDYY), 162 to 207 (RGHS…TCFY), 208 to 243 (FGELPLSLAACTKQWDVVSYLLENPHQPASLQATDS), 244 to 292 (QGNT…IRNL), and 293 to 319 (QDLTPLKLAAKEGKIEIFRHILQREFS). A helical membrane pass occupies residues 391 to 411 (FFLNFLCNLIYMFIFTAVAYH). Residues 412–434 (QPTLKKQAAPHLKAEVGNSMLLT) are Extracellular-facing. The helical transmembrane segment at 435–455 (GHILILLGGIYLLVGQLWYFW) threads the bilayer. Over 456 to 471 (RRHVFIWISFIDSYFE) the chain is Cytoplasmic. A helical membrane pass occupies residues 472–492 (ILFLFQALLTVVSQVLCFLAI). Position 493 (Glu493) is a topological domain, extracellular. The helical transmembrane segment at 494–514 (WYLPLLVSALVLGWLNLLYYT) threads the bilayer. The Cytoplasmic portion of the chain corresponds to 515–537 (RGFQHTGIYSVMIQKVILRDLLR). Residues 538 to 558 (FLLIYLVFLFGFAVALVSLSQ) traverse the membrane as a helical segment. Positions 562–585 (RPEAPTGPNATESVQPMEGQEDEG) are disordered. N-linked (GlcNAc...) asparagine glycosylation occurs at Asn570. Positions 572–609 (TESVQPMEGQEDEGNGAQYRGILEASLELFKFTIGMGE) form an intramembrane region, pore-forming. A helical transmembrane segment spans residues 622–642 (VLLLLLAYVLLTYILLLNMLI). At 643–764 (ALMSETVNSV…YVPVQLLQSN (122 aa)) the chain is on the cytoplasmic side. Residues 725 to 756 (PSGAGVPRTLENPVLASPPKEDEDGASEENYV) are disordered. Phosphoserine is present on residues Ser751 and Ser763.

The protein belongs to the transient receptor (TC 1.A.4) family. TrpV subfamily. TRPV2 sub-subfamily. In terms of assembly, homotetramer. Interacts with a cAMP-dependent protein kinase type II regulatory subunit (PRKAR2A or PRKAR2B) and ACBD3. Interacts with SLC50A1; the interaction probably occurs intracellularly and depends on TRPV2 N-glycosylation. Post-translationally, N-glycosylated. In terms of processing, phosphorylated by PKA.

It localises to the cell membrane. Its subcellular location is the cytoplasm. It is found in the melanosome. It carries out the reaction Ca(2+)(in) = Ca(2+)(out). It catalyses the reaction Mg(2+)(in) = Mg(2+)(out). The enzyme catalyses Na(+)(in) = Na(+)(out). The catalysed reaction is K(+)(in) = K(+)(out). Functionally, calcium-permeable, non-selective cation channel with an outward rectification. Seems to be regulated, at least in part, by IGF1, PDGF and neuropeptide head activator. May transduce physical stimuli in mast cells. Activated by temperatures higher than 52 degrees Celsius; is not activated by vanilloids and acidic pH. The sequence is that of Transient receptor potential cation channel subfamily V member 2 (TRPV2) from Homo sapiens (Human).